The sequence spans 318 residues: MSSHDGLMVFTGNANPALAQEVVKILGIPLGKAMVSRFSDGEIQVEIQENVRGKDVFVLQSTCAPTNDNLMELMIMVDALKRASAGRITAAIPYFGYARQDRRPRSARVAISAKVVANMLEIAGVERIITMDLHADQIQGFFDIPVDNIYATPILLGDLRKQNYPDLLVVSPDVGGVVRARALAKQLNCDLAIIDKRRPKANVAEVMNIIGEVEGRTCVIMDDMVDTAGTLCKAAQVLKERGAKQVFAYATHPVLSGGAADRIAASALDELVVTDTIPLSAESLACPKIRALSSAGLLAETFSRIRRGDSVMSLFAES.

ATP contacts are provided by residues 40–42 and 99–100; these read DGE and RQ. 2 residues coordinate Mg(2+): H134 and D173. The active site involves K196. Residues R198, D222, and 226–230 each bind D-ribose 5-phosphate; that span reads DTAGT.

This sequence belongs to the ribose-phosphate pyrophosphokinase family. Class I subfamily. Homohexamer. It depends on Mg(2+) as a cofactor.

It is found in the cytoplasm. It catalyses the reaction D-ribose 5-phosphate + ATP = 5-phospho-alpha-D-ribose 1-diphosphate + AMP + H(+). It participates in metabolic intermediate biosynthesis; 5-phospho-alpha-D-ribose 1-diphosphate biosynthesis; 5-phospho-alpha-D-ribose 1-diphosphate from D-ribose 5-phosphate (route I): step 1/1. Functionally, involved in the biosynthesis of the central metabolite phospho-alpha-D-ribosyl-1-pyrophosphate (PRPP) via the transfer of pyrophosphoryl group from ATP to 1-hydroxyl of ribose-5-phosphate (Rib-5-P). The sequence is that of Ribose-phosphate pyrophosphokinase from Burkholderia pseudomallei (strain K96243).